The sequence spans 227 residues: uncharacterized protein (227 aa).

Residues 52–100 (NKRAKLYRERNKAKLKEKQHKWYHKGGGKEHKKLYDKINLEKSNMRDKN) adopt a coiled-coil conformation.

Belongs to the mimivirus L246/L426 family.

This is an uncharacterized protein from Acanthamoeba polyphaga mimivirus (APMV).